The chain runs to 62 residues: Photosystem II reaction center protein Z (62 aa).

2 helical membrane passes run 8–28 and 41–61; these read ALFA…IVFA and FSGT…NSLI.

It belongs to the PsbZ family. As to quaternary structure, PSII is composed of 1 copy each of membrane proteins PsbA, PsbB, PsbC, PsbD, PsbE, PsbF, PsbH, PsbI, PsbJ, PsbK, PsbL, PsbM, PsbT, PsbY, PsbZ, Psb30/Ycf12, at least 3 peripheral proteins of the oxygen-evolving complex and a large number of cofactors. It forms dimeric complexes.

It is found in the plastid. The protein resides in the chloroplast thylakoid membrane. In terms of biological role, may control the interaction of photosystem II (PSII) cores with the light-harvesting antenna, regulates electron flow through the 2 photosystem reaction centers. PSII is a light-driven water plastoquinone oxidoreductase, using light energy to abstract electrons from H(2)O, generating a proton gradient subsequently used for ATP formation. The protein is Photosystem II reaction center protein Z of Drimys granadensis.